The primary structure comprises 419 residues: D-amino acid dehydrogenase (419 aa).

Residue 3–17 (VIVLGSGVIGVASAY) coordinates FAD.

Belongs to the DadA oxidoreductase family. Requires FAD as cofactor.

The enzyme catalyses a D-alpha-amino acid + A + H2O = a 2-oxocarboxylate + AH2 + NH4(+). Its pathway is amino-acid degradation; D-alanine degradation; NH(3) and pyruvate from D-alanine: step 1/1. In terms of biological role, oxidative deamination of D-amino acids. In Acinetobacter baylyi (strain ATCC 33305 / BD413 / ADP1), this protein is D-amino acid dehydrogenase.